A 511-amino-acid polypeptide reads, in one-letter code: Lysine--tRNA ligase (511 aa).

Residues 1 to 21 are disordered; the sequence is MHTEKDPNKNTPEQQTPISLN. Positions 9–21 are enriched in polar residues; sequence KNTPEQQTPISLN. Residues E422 and E429 each coordinate Mg(2+).

Belongs to the class-II aminoacyl-tRNA synthetase family. As to quaternary structure, homodimer. It depends on Mg(2+) as a cofactor.

Its subcellular location is the cytoplasm. The enzyme catalyses tRNA(Lys) + L-lysine + ATP = L-lysyl-tRNA(Lys) + AMP + diphosphate. This Pelodictyon phaeoclathratiforme (strain DSM 5477 / BU-1) protein is Lysine--tRNA ligase.